A 166-amino-acid chain; its full sequence is Regulator of ribonuclease activity A (166 aa).

This sequence belongs to the RraA family. As to quaternary structure, homotrimer. Binds to both RNA-binding sites in the C-terminal region of Rne and to RhlB.

The protein localises to the cytoplasm. Functionally, globally modulates RNA abundance by binding to RNase E (Rne) and regulating its endonucleolytic activity. Can modulate Rne action in a substrate-dependent manner by altering the composition of the degradosome. Modulates RNA-binding and helicase activities of the degradosome. The chain is Regulator of ribonuclease activity A from Glaesserella parasuis serovar 5 (strain SH0165) (Haemophilus parasuis).